The sequence spans 1226 residues: MKGNSRHPSVPPPPLAPQSPTSKATAKYTNKDGSKFITVPKGSTPADSAQPSPTITTAANAAPGPQSASTSHTQGHGLGQAEGQVQPVNKKKAKRRQKAAAKAAATQGIANPAPSNGFPSPSPSHAQQSTEADHDDSHDEHLEEFNNRRDSRASNIHENGFAQGATTSSKKSKKKKKKSHAGQNAAELPNSPQHDTYVPAPQLSQHPRPGISKEKIWNTSSQEERERIKEFWLGLSETERKELVRVEKDAVLKKMKEQQKHTCSCTVCGRKRTAIEEELEGLYDAYYEELEQYANHPNQGEAPPMLGRRPSFGSMTGMRPRGLPTSYPSHHQPSHAQIVDHGAEEDDEEEEVEEEYSEDEQDEDDYSDDEPSEELHRSDYPADFFNFGNSLTVQGGILTVADDLLKNDGKKFIEMMEQLAERRMAREEDARDQFGSPFSHSAGDRNAHYHPPADDEVDDEEYDEDYDDDEEEEYDSQDEEETMTEEQRMEEGRRMFQIFAARMFEQRVLTAYREKVARERQNMLLEELADEKRRSEERLVKKQKEAQKKKERQARKKELQAEEKARREEEKMAEEKAKKAEEDRQKEQRRQKEEEKRKQKEAQKKAEEEERRRKEAERQRRNHEREENERKARELKEREKKAREEARLKEKEAREQKEREAKEQKERQERQERQEREKREREAKAKAEMEAAKAAKDKSKQEDRAAQKAAALATTAPVPITLPKRPAQPIQTSVPAAVPALPQQPAAYASPVIPVATPAFPKVPAPAQSRQIHQQESVTTSSGPTSQPGSAVSQNPSPHTLTPILTSPGPVKPPSKSGVAVSGTQNSGVQLPSPAPSTTVNAGSKPLQSQANPFGGPSMNMPFQPTPQPPPGFSNHMQPQYPPFYNPANSYNRVAPGMMAAPPGFSAPLGGRAMSMHSPGFPGPLDSPVSSFAGLPAGLSSLLGKDNVPSHTRQGSGSFEIGPVSSSSQPISRPTPIGRPASVVHGQRRSPEFSTNGTDQAEQEVHLGSSALLEPDDTQQDFPARSHFGLLGTSAPGVRSAPGFGGGPFGMETGFSLPHQNSPWNPVPPLQHNPFVPPPPGFPSSSHHGPWSQAAPPGIMGRNPSIVERSAPWSVTLRKSLCAVCEDLGAGGSSSYDGFIPLGEIMAHMKQFTVNEKEVLDICDTEGNPSNGGGSFIVRDPLSPSGSPLIRYVPDDDASRAPYGPIKHPGDIGSPIVGSGSFHVGS.

Disordered regions lie at residues methionine 1–arginine 225, alanine 294–glycine 388, arginine 423–glutamate 491, glutamate 526–alanine 727, threonine 757–histidine 876, and glycine 944–alanine 1001. Residues proline 45 to alanine 59 show a composition bias toward polar residues. Residues asparagine 89–alanine 99 are compositionally biased toward basic residues. A compositionally biased stretch (polar residues) spans alanine 113 to threonine 130. Residues glutamate 131–arginine 152 show a composition bias toward basic and acidic residues. The span at lysine 170–histidine 180 shows a compositional bias: basic residues. A compositionally biased stretch (basic and acidic residues) spans isoleucine 211–arginine 225. Polar residues predominate over residues serine 326–histidine 335. Residues alanine 343–serine 372 are compositionally biased toward acidic residues. 2 stretches are compositionally biased toward basic and acidic residues: residues arginine 423–aspartate 432 and alanine 442–alanine 453. A compositionally biased stretch (acidic residues) spans aspartate 454 to threonine 484. A coiled-coil region spans residues alanine 517–lysine 708. Basic and acidic residues-rich tracts occupy residues aspartate 530–lysine 548 and lysine 556–alanine 706. Low complexity-rich tracts occupy residues glutamine 707 to alanine 716 and serine 777 to serine 790. Composition is skewed to polar residues over residues alanine 791–leucine 805 and serine 822–asparagine 852.

Belongs to the NST1 family.

It localises to the cytoplasm. In terms of biological role, may act as a negative regulator of salt tolerance. This chain is Stress response protein nst1 (nst1), found in Neurospora crassa (strain ATCC 24698 / 74-OR23-1A / CBS 708.71 / DSM 1257 / FGSC 987).